Here is a 512-residue protein sequence, read N- to C-terminus: Sodium/proline symporter (512 aa).

The next 13 helical transmembrane spans lie at 16–36, 54–74, 85–105, 139–159, 174–194, 200–220, 240–260, 286–306, 327–347, 381–401, 410–430, 438–458, and 467–487; these read WQTY…GFYG, IGPY…WMIM, LSAM…YFVV, IISG…GFVS, FGLI…GYLA, FFQG…AMMN, LFKG…LGYF, ISWM…GIAF, VLFH…AIMS, FVMI…AIAW, LVGN…LFAL, AGAV…IAWI, and IFGL…TYVV.

Belongs to the sodium:solute symporter (SSF) (TC 2.A.21) family.

The protein resides in the cell membrane. It catalyses the reaction L-proline(in) + Na(+)(in) = L-proline(out) + Na(+)(out). In terms of biological role, catalyzes the sodium-dependent uptake of extracellular L-proline. Since most S.aureus strains are L-proline auxotrophs, this transporter may aid the bacterial persistence during an infection of tissues with low proline concentrations. The chain is Sodium/proline symporter (putP) from Staphylococcus aureus (strain Mu3 / ATCC 700698).